Here is a 632-residue protein sequence, read N- to C-terminus: RNA-binding post-transcriptional regulator csx1 (632 aa).

Phosphoserine; by MAPK sty1 occurs at positions 42 and 54. Phosphoserine is present on residues Ser-67 and Ser-69. RRM domains are found at residues 85–167 and 182–261; these read DTLW…WATG and FSIF…VASP. Position 291 is a phosphoserine; by MAPK sty1 (Ser-291). An RRM 3 domain is found at 297–369; it reads TTVFVGGLAS…SHIRLAWGHN (73 aa). A Phosphoserine; by MAPK sty1 modification is found at Ser-455. The segment at 456–476 is disordered; that stretch reads PPPLSRSASISPTLSGSGSGL. The span at 466 to 476 shows a compositional bias: low complexity; sequence SPTLSGSGSGL.

Interacts with cip1 and cip2.

It is found in the cytoplasm. Regulates global gene expression after oxidative stress. Interacts and stabilizes atf1 and pcr1 mRNAs after oxidative stress, thus controlling their turnover. The chain is RNA-binding post-transcriptional regulator csx1 (csx1) from Schizosaccharomyces pombe (strain 972 / ATCC 24843) (Fission yeast).